Here is a 1104-residue protein sequence, read N- to C-terminus: Isoleucine--tRNA ligase (1104 aa).

The 'HIGH' region signature appears at 48 to 58 (PYTTGRIHLGT). The short motif at 644–648 (KMSKS) is the 'KMSKS' region element. K647 contacts ATP.

Belongs to the class-I aminoacyl-tRNA synthetase family. IleS type 2 subfamily. As to quaternary structure, monomer. Zn(2+) serves as cofactor.

Its subcellular location is the cytoplasm. It carries out the reaction tRNA(Ile) + L-isoleucine + ATP = L-isoleucyl-tRNA(Ile) + AMP + diphosphate. In terms of biological role, catalyzes the attachment of isoleucine to tRNA(Ile). As IleRS can inadvertently accommodate and process structurally similar amino acids such as valine, to avoid such errors it has two additional distinct tRNA(Ile)-dependent editing activities. One activity is designated as 'pretransfer' editing and involves the hydrolysis of activated Val-AMP. The other activity is designated 'posttransfer' editing and involves deacylation of mischarged Val-tRNA(Ile). The sequence is that of Isoleucine--tRNA ligase from Methanocella arvoryzae (strain DSM 22066 / NBRC 105507 / MRE50).